Reading from the N-terminus, the 551-residue chain is Membrane protein insertase YidC (551 aa).

A helical transmembrane segment spans residues Ala-3–Gly-23. A compositionally biased stretch (polar residues) spans Asn-33 to Tyr-47. A disordered region spans residues Asn-33–Thr-59. The span at Ala-50–Thr-59 shows a compositional bias: low complexity. 3 helical membrane-spanning segments follow: residues Leu-361–Tyr-381, Leu-431–Leu-451, and Val-504–Val-524.

This sequence belongs to the OXA1/ALB3/YidC family. Type 1 subfamily. As to quaternary structure, interacts with the Sec translocase complex via SecD. Specifically interacts with transmembrane segments of nascent integral membrane proteins during membrane integration.

The protein localises to the cell inner membrane. Required for the insertion and/or proper folding and/or complex formation of integral membrane proteins into the membrane. Involved in integration of membrane proteins that insert both dependently and independently of the Sec translocase complex, as well as at least some lipoproteins. Aids folding of multispanning membrane proteins. The polypeptide is Membrane protein insertase YidC (Francisella tularensis subsp. mediasiatica (strain FSC147)).